A 353-amino-acid polypeptide reads, in one-letter code: Protein RecA (353 aa).

Residue 68–75 participates in ATP binding; it reads GPESSGKT.

It belongs to the RecA family.

The protein localises to the cytoplasm. Its function is as follows. Can catalyze the hydrolysis of ATP in the presence of single-stranded DNA, the ATP-dependent uptake of single-stranded DNA by duplex DNA, and the ATP-dependent hybridization of homologous single-stranded DNAs. It interacts with LexA causing its activation and leading to its autocatalytic cleavage. This is Protein RecA from Roseiflexus castenholzii (strain DSM 13941 / HLO8).